A 509-amino-acid chain; its full sequence is UDP-N-acetylmuramoyl-L-alanyl-D-glutamate--2,6-diaminopimelate ligase (509 aa).

Serine 32 is a binding site for UDP-N-acetyl-alpha-D-muramoyl-L-alanyl-D-glutamate. 117–123 (GTNGKTT) contacts ATP. Residues 159–160 (TT), serine 186, glutamine 192, and arginine 194 each bind UDP-N-acetyl-alpha-D-muramoyl-L-alanyl-D-glutamate. Lysine 226 carries the post-translational modification N6-carboxylysine. Residues arginine 401, 425-428 (DNPR), glycine 476, and glutamate 480 contribute to the meso-2,6-diaminopimelate site. Residues 425–428 (DNPR) carry the Meso-diaminopimelate recognition motif motif.

The protein belongs to the MurCDEF family. MurE subfamily. It depends on Mg(2+) as a cofactor. In terms of processing, carboxylation is probably crucial for Mg(2+) binding and, consequently, for the gamma-phosphate positioning of ATP.

Its subcellular location is the cytoplasm. It carries out the reaction UDP-N-acetyl-alpha-D-muramoyl-L-alanyl-D-glutamate + meso-2,6-diaminopimelate + ATP = UDP-N-acetyl-alpha-D-muramoyl-L-alanyl-gamma-D-glutamyl-meso-2,6-diaminopimelate + ADP + phosphate + H(+). Its pathway is cell wall biogenesis; peptidoglycan biosynthesis. Catalyzes the addition of meso-diaminopimelic acid to the nucleotide precursor UDP-N-acetylmuramoyl-L-alanyl-D-glutamate (UMAG) in the biosynthesis of bacterial cell-wall peptidoglycan. This Prochlorococcus marinus (strain NATL2A) protein is UDP-N-acetylmuramoyl-L-alanyl-D-glutamate--2,6-diaminopimelate ligase.